The sequence spans 381 residues: MASSTQGQVITCKAAVAWEANRPMTIEDVQVAPPQAGEVRVKILFTALCHTDHYTWSGKDPEGLFPCILGHEAAGIVESVGEGVTEVQPGDHVIPCYQAECRECKFCKSGKTNLCGKVRAATGVGVMMNDRKSRFSINGKPIYHFMGTSTFSQYTVVHDVSVAKINPQAPLDKVCLLGCGVSTGLGAVWNTAKVEAGSIVAIFGLGTVGLAVAEGAKSAGASRIIGIDIDSKKFDVAKNFGVTEFVNPKDHDKPIQQVIVDLTDGGVDYSFECIGNVSVMRSALECCHKGWGTSVIVGVAASGQEISTRPFQLVTGRVWKGTAFGGFKSRSQVPWLVEKYLNKEIKVDEYVTHSMNLTDINKAFDLLHEGGCLRCVLATDK.

Position 49 (C49) interacts with Zn(2+). NAD(+) is bound at residue H50. An alcohol is bound by residues T51 and H71. Residues H71, E72, C101, C104, C107, C115, and C179 each coordinate Zn(2+). Residues 204 to 209, D228, K233, I274, 297 to 299, 322 to 324, and R374 each bind NAD(+); these read GLGTVG, VGV, and TAF.

This sequence belongs to the zinc-containing alcohol dehydrogenase family. Class-III subfamily. In terms of assembly, homodimer. Zn(2+) is required as a cofactor.

It is found in the cytoplasm. The enzyme catalyses a primary alcohol + NAD(+) = an aldehyde + NADH + H(+). It catalyses the reaction a secondary alcohol + NAD(+) = a ketone + NADH + H(+). The catalysed reaction is S-(hydroxymethyl)glutathione + NADP(+) = S-formylglutathione + NADPH + H(+). It carries out the reaction S-(hydroxymethyl)glutathione + NAD(+) = S-formylglutathione + NADH + H(+). The polypeptide is Alcohol dehydrogenase class-3 (Oryza sativa subsp. japonica (Rice)).